Reading from the N-terminus, the 146-residue chain is MKTFSAKAHEVKRDWFVVDATDLVLGRLASEIAHRLRGKHKTIYTPHVDTGDYIVVINADKIKVTGNKALDKKYHRHSGYPGGISTTTFGKMQERFPGRALEKAVKGMLPKGPLGYAMFRKLKVYAGDKHDHVAQQPQPLVIQSQA.

Belongs to the universal ribosomal protein uL13 family. In terms of assembly, part of the 50S ribosomal subunit.

Functionally, this protein is one of the early assembly proteins of the 50S ribosomal subunit, although it is not seen to bind rRNA by itself. It is important during the early stages of 50S assembly. This Methylobacillus flagellatus (strain ATCC 51484 / DSM 6875 / VKM B-1610 / KT) protein is Large ribosomal subunit protein uL13.